Reading from the N-terminus, the 926-residue chain is Glycogenin (926 aa).

UDP contacts are provided by Leu-10, Thr-12, Tyr-16, and Arg-85. 13 residues coordinate UDP-alpha-D-glucose: Leu-10, Thr-12, Tyr-16, Arg-85, Lys-94, Asp-111, Ala-112, Asp-113, Asn-145, Ser-146, Asp-184, Asp-187, and Gln-188. Asp-111, Ala-112, and Asp-113 together coordinate UDP. Residue Asp-111 coordinates Mn(2+). Position 113 (Asp-113) interacts with Mn(2+). The O-linked (Glc...) tyrosine glycan is linked to Tyr-219. UDP is bound by residues His-236, Gly-239, and Lys-242. His-236 is a binding site for Mn(2+). The UDP-alpha-D-glucose site is built by Gly-239 and Lys-242. Disordered stretches follow at residues 379–432 (PSVS…PEMS), 452–476 (YYAH…LPKE), 547–584 (SIQN…PPRH), 611–749 (MSGK…ETVQ), and 768–903 (LPHA…PNTD). Over residues 386–402 (LTPPPADAAPAPAPAPV) the composition is skewed to pro residues. Positions 404-413 (TQTEQKTAQP) are enriched in polar residues. Basic and acidic residues predominate over residues 456-469 (PESHRPATEHKEPE). Low complexity predominate over residues 557–566 (AHSQHQSHAT). The span at 655–683 (SLHSLQSVPGTPRTQYSTFGKSPRLTNAR) shows a compositional bias: polar residues. Over residues 692–704 (EQPEDSADGDDEN) the composition is skewed to acidic residues. The span at 733 to 745 (DRWAQTDRVKTVD) shows a compositional bias: basic and acidic residues. Gly residues predominate over residues 788 to 798 (SGNGRAGGGGQ). Residues 800–812 (EAQTQHQSTYYEY) show a composition bias toward polar residues. Low complexity-rich tracts occupy residues 813 to 824 (QQQHPHSQQSRQ) and 851 to 875 (HAQG…NPNL).

Belongs to the glycosyltransferase 8 family. Glycogenin subfamily. Requires Mn(2+) as cofactor.

It is found in the cytoplasm. Its subcellular location is the vacuole. The enzyme catalyses L-tyrosyl-[glycogenin] + UDP-alpha-D-glucose = alpha-D-glucosyl-L-tyrosyl-[glycogenin] + UDP + H(+). It carries out the reaction [1,4-alpha-D-glucosyl](n)-L-tyrosyl-[glycogenin] + UDP-alpha-D-glucose = [1,4-alpha-D-glucosyl](n+1)-L-tyrosyl-[glycogenin] + UDP + H(+). In terms of biological role, self-glucosylating initiator of glycogen synthesis. It catalyzes the formation of a short alpha (1,4)-glucosyl chain covalently attached via a glucose 1-O-tyrosyl linkage to internal tyrosine residues and these chains act as primers for the elongation reaction catalyzed by glycogen synthase. This Cryptococcus neoformans var. grubii serotype A (strain H99 / ATCC 208821 / CBS 10515 / FGSC 9487) (Filobasidiella neoformans var. grubii) protein is Glycogenin.